The following is a 254-amino-acid chain: 3-deoxy-manno-octulosonate cytidylyltransferase (254 aa).

It belongs to the KdsB family.

The protein localises to the cytoplasm. The enzyme catalyses 3-deoxy-alpha-D-manno-oct-2-ulosonate + CTP = CMP-3-deoxy-beta-D-manno-octulosonate + diphosphate. It functions in the pathway nucleotide-sugar biosynthesis; CMP-3-deoxy-D-manno-octulosonate biosynthesis; CMP-3-deoxy-D-manno-octulosonate from 3-deoxy-D-manno-octulosonate and CTP: step 1/1. It participates in bacterial outer membrane biogenesis; lipopolysaccharide biosynthesis. Functionally, activates KDO (a required 8-carbon sugar) for incorporation into bacterial lipopolysaccharide in Gram-negative bacteria. In Porphyromonas gingivalis (strain ATCC BAA-308 / W83), this protein is 3-deoxy-manno-octulosonate cytidylyltransferase.